We begin with the raw amino-acid sequence, 312 residues long: Malate dehydrogenase (312 aa).

NAD(+) is bound by residues 12 to 17 and D36; that span reads GAGFTG. Substrate-binding residues include R87 and R93. Residues N100 and 123–125 each bind NAD(+); that span reads LTN. N125 contacts substrate. S149 bears the Phosphoserine mark. R156 contributes to the substrate binding site. The active-site Proton acceptor is H180.

Belongs to the LDH/MDH superfamily. MDH type 3 family.

The enzyme catalyses (S)-malate + NAD(+) = oxaloacetate + NADH + H(+). Catalyzes the reversible oxidation of malate to oxaloacetate. This chain is Malate dehydrogenase, found in Geobacillus sp. (strain WCH70).